A 448-amino-acid chain; its full sequence is Adenylosuccinate synthetase (448 aa).

GTP is bound by residues 22-28 and 50-52; these read GDEGKGK and GHT. D23 serves as the catalytic Proton acceptor. Positions 23 and 50 each coordinate Mg(2+). IMP-binding positions include 23–26, 48–51, T139, R153, Q234, T249, and R321; these read DEGK and NAGH. H51 serves as the catalytic Proton donor. Position 317 to 323 (317 to 323) interacts with substrate; it reads SVTGRPR. GTP contacts are provided by residues R323, 349-351, and 431-433; these read KLD and STG.

Belongs to the adenylosuccinate synthetase family. As to quaternary structure, homodimer. It depends on Mg(2+) as a cofactor.

Its subcellular location is the cytoplasm. It carries out the reaction IMP + L-aspartate + GTP = N(6)-(1,2-dicarboxyethyl)-AMP + GDP + phosphate + 2 H(+). Its pathway is purine metabolism; AMP biosynthesis via de novo pathway; AMP from IMP: step 1/2. Its function is as follows. Plays an important role in the de novo pathway of purine nucleotide biosynthesis. Catalyzes the first committed step in the biosynthesis of AMP from IMP. The chain is Adenylosuccinate synthetase from Burkholderia pseudomallei (strain 1106a).